The following is a 623-amino-acid chain: Keratin, type I cytoskeletal 9 (623 aa).

The span at Met1–Arg13 shows a compositional bias: low complexity. Residues Met1–Gly25 are disordered. The segment at Met1–Asn152 is head. 2 positions are modified to phosphoserine: Ser14 and Ser57. Over residues Ser14 to Gly25 the composition is skewed to gly residues. The tract at residues Glu153–Trp188 is coil 1A. The IF rod domain maps to Glu153–Phe465. A linker 1 region spans residues Tyr189–Thr207. A coil 1B region spans residues Ile208–Leu299. A linker 12 region spans residues Thr300–Thr322. A coil 2 region spans residues Leu323–Gly461. 2 disordered regions span residues Gln462 to Ser496 and Tyr534 to Ser623. The tail stretch occupies residues Gln462–Ser623. The segment covering Gly471–Ser496 has biased composition (gly residues).

This sequence belongs to the intermediate filament family. As to quaternary structure, heterotetramer of two type I and two type II keratins. As to expression, expressed in the terminally differentiated epidermis of palms and soles.

Its function is as follows. May serve an important special function either in the mature palmar and plantar skin tissue or in the morphogenetic program of the formation of these tissues. Plays a role in keratin filament assembly. In Homo sapiens (Human), this protein is Keratin, type I cytoskeletal 9 (KRT9).